Here is a 168-residue protein sequence, read N- to C-terminus: G/U mismatch-specific DNA glycosylase (168 aa).

This sequence belongs to the uracil-DNA glycosylase (UDG) superfamily. TDG/mug family. In terms of assembly, binds DNA as a monomer.

It is found in the cytoplasm. It catalyses the reaction Specifically hydrolyzes mismatched double-stranded DNA and polynucleotides, releasing free uracil.. Its function is as follows. Excises ethenocytosine and uracil, which can arise by alkylation or deamination of cytosine, respectively, from the corresponding mispairs with guanine in ds-DNA. It is capable of hydrolyzing the carbon-nitrogen bond between the sugar-phosphate backbone of the DNA and the mispaired base. The complementary strand guanine functions in substrate recognition. Required for DNA damage lesion repair in stationary-phase cells. This is G/U mismatch-specific DNA glycosylase from Cronobacter sakazakii (strain ATCC BAA-894) (Enterobacter sakazakii).